We begin with the raw amino-acid sequence, 285 residues long: Nucleotide-binding protein PSPPH_4154 (285 aa).

8-15 (GRSGSGKS) lines the ATP pocket. 60-63 (DARN) provides a ligand contact to GTP.

This sequence belongs to the RapZ-like family.

Its function is as follows. Displays ATPase and GTPase activities. This is Nucleotide-binding protein PSPPH_4154 from Pseudomonas savastanoi pv. phaseolicola (strain 1448A / Race 6) (Pseudomonas syringae pv. phaseolicola (strain 1448A / Race 6)).